A 164-amino-acid chain; its full sequence is Endoribonuclease YbeY (164 aa).

The Zn(2+) site is built by His-130, His-134, and His-140.

It belongs to the endoribonuclease YbeY family. Requires Zn(2+) as cofactor.

The protein localises to the cytoplasm. Functionally, single strand-specific metallo-endoribonuclease involved in late-stage 70S ribosome quality control and in maturation of the 3' terminus of the 16S rRNA. In Streptococcus mutans serotype c (strain ATCC 700610 / UA159), this protein is Endoribonuclease YbeY.